We begin with the raw amino-acid sequence, 344 residues long: Probable aldo-keto reductase 1 (344 aa).

Tyr-63 serves as the catalytic Proton donor. Position 130 (His-130) interacts with substrate. 209–219 (SPLGLGFFAAG) contacts NADP(+).

It belongs to the aldo/keto reductase family.

The protein is Probable aldo-keto reductase 1 of Arabidopsis thaliana (Mouse-ear cress).